The following is an 834-amino-acid chain: Copper-exporting P-type ATPase (834 aa).

2 HMA domains span residues 3 to 64 (QTID…YDAS) and 99 to 162 (DSQQ…YGAE). Cys-14, Cys-17, Cys-110, and Cys-113 together coordinate Cu(+). 6 consecutive transmembrane segments (helical) span residues 187-207 (WQAIVALAVGIPVMVWGMIGD), 218-238 (LWLVIGLITLAVMVFAGGHFY), 254-274 (TLVALGTGVAWLYSMSVNLWP), 284-304 (LYYEASAMIIGLINLGHMLEA), 438-458 (AVFVPVVVVIALVSAAIWYFF), and 464-484 (IVYTLVIATTVLIIACPCALG). Asp-523 functions as the 4-aspartylphosphate intermediate in the catalytic mechanism. Mg(2+) is bound by residues Asp-720 and Asp-724. The next 2 membrane-spanning stretches (helical) occupy residues 779–799 (LGAFIYNSIGIPVAAGILWPF) and 801–821 (GTLLNPVVAGAAMALSSITVV).

It belongs to the cation transport ATPase (P-type) (TC 3.A.3) family. Type IB subfamily.

It is found in the cell inner membrane. The protein resides in the cytoplasm. The enzyme catalyses Cu(+)(in) + ATP + H2O = Cu(+)(out) + ADP + phosphate + H(+). Its function is as follows. Involved in Cu(+) export. Functionally, probably also encodes a cytoplasmic copper chaperone CopA(Z) that is produced by programmed ribosomal frameshifting. The polypeptide is Copper-exporting P-type ATPase (copA) (Escherichia coli O157:H7).